Here is a 303-residue protein sequence, read N- to C-terminus: Quinolinate synthase (303 aa).

His25 and Ser42 together coordinate iminosuccinate. Cys87 serves as a coordination point for [4Fe-4S] cluster. Residues 113 to 115 (YVN) and Ser130 each bind iminosuccinate. Cys173 contacts [4Fe-4S] cluster. Iminosuccinate-binding positions include 199 to 201 (HPE) and Thr216. Cys261 is a binding site for [4Fe-4S] cluster.

This sequence belongs to the quinolinate synthase family. Type 2 subfamily. It depends on [4Fe-4S] cluster as a cofactor.

It localises to the cytoplasm. It catalyses the reaction iminosuccinate + dihydroxyacetone phosphate = quinolinate + phosphate + 2 H2O + H(+). It participates in cofactor biosynthesis; NAD(+) biosynthesis; quinolinate from iminoaspartate: step 1/1. In terms of biological role, catalyzes the condensation of iminoaspartate with dihydroxyacetone phosphate to form quinolinate. The chain is Quinolinate synthase from Desulforudis audaxviator (strain MP104C).